The following is a 235-amino-acid chain: Large ribosomal subunit protein uL1 (235 aa).

Belongs to the universal ribosomal protein uL1 family. Part of the 50S ribosomal subunit.

Its function is as follows. Binds directly to 23S rRNA. The L1 stalk is quite mobile in the ribosome, and is involved in E site tRNA release. In terms of biological role, protein L1 is also a translational repressor protein, it controls the translation of the L11 operon by binding to its mRNA. The polypeptide is Large ribosomal subunit protein uL1 (Citrobacter koseri (strain ATCC BAA-895 / CDC 4225-83 / SGSC4696)).